Consider the following 279-residue polypeptide: HTH-type transcriptional regulator HdfR (279 aa).

The 58-residue stretch at 1-58 (MDTELLKTFLEVSRTRHFGRAAESLYLTQSAVSFRIRQLENQLGVNLFTRHRNNIRLT) folds into the HTH lysR-type domain. The H-T-H motif DNA-binding region spans 18 to 37 (FGRAAESLYLTQSAVSFRIR).

Belongs to the LysR transcriptional regulatory family.

Negatively regulates the transcription of the flagellar master operon flhDC by binding to the upstream region of the operon. The sequence is that of HTH-type transcriptional regulator HdfR from Escherichia fergusonii (strain ATCC 35469 / DSM 13698 / CCUG 18766 / IAM 14443 / JCM 21226 / LMG 7866 / NBRC 102419 / NCTC 12128 / CDC 0568-73).